Here is a 1172-residue protein sequence, read N- to C-terminus: Laminin subunit beta-3 (1172 aa).

An N-terminal signal peptide occupies residues 1-17; sequence MRPFFLLCFALPGLLHA. The Laminin N-terminal domain maps to 22-249; it reads SRGACYPPVG…AVSQLRLQGS (228 aa). Residue asparagine 220 is glycosylated (N-linked (GlcNAc...) asparagine). Disulfide bonds link cysteine 250–cysteine 259, cysteine 252–cysteine 279, cysteine 281–cysteine 290, cysteine 293–cysteine 313, cysteine 316–cysteine 325, cysteine 318–cysteine 343, cysteine 346–cysteine 355, cysteine 358–cysteine 376, cysteine 379–cysteine 392, cysteine 381–cysteine 399, cysteine 401–cysteine 410, cysteine 413–cysteine 428, cysteine 431–cysteine 444, cysteine 433–cysteine 451, cysteine 453–cysteine 462, cysteine 465–cysteine 478, cysteine 481–cysteine 493, cysteine 483–cysteine 500, cysteine 502–cysteine 511, cysteine 519–cysteine 531, cysteine 534–cysteine 546, cysteine 536–cysteine 553, cysteine 555–cysteine 564, and cysteine 567–cysteine 578. Laminin EGF-like domains are found at residues 250–315, 316–378, 379–430, 431–480, 481–533, and 534–580; these read CFCH…ECQR, CDCN…TCIS, CECD…GCHR, CDCN…GCEP, CACD…GCRA, and CDCD…VCVA. The interval 579 to 785 is domain II; it reads VACHPCFQTY…SLPDLTPTFN (207 aa). A glycan (N-linked (GlcNAc...) asparagine) is linked at asparagine 604. Residues 723–757 are a coiled coil; that stretch reads EQSAQAAQQVSDSSRLLDQLRDSRREAERLVRQAG. A domain alpha region spans residues 786-816; sequence KLCGNSRQMACTPISCPGELCPQDNGTACGS. Asparagine 810 is a glycosylation site (N-linked (GlcNAc...) asparagine). Residues 817–1170 are domain I; it reads RCRGVLPRAG…INGRVLYYAT (354 aa). 2 coiled-coil regions span residues 831-884 and 948-1133; these read MAGQ…MEED and VLSQ…ELEL.

Laminin is a complex glycoprotein, consisting of three different polypeptide chains (alpha, beta, gamma), which are bound to each other by disulfide bonds into a cross-shaped molecule comprising one long and three short arms with globules at each end. Beta-3 is a subunit of laminin-5 (laminin-332 or epiligrin/kalinin/nicein). Interacts with ECM1. Found in the basement membranes (major component).

The protein localises to the secreted. It localises to the extracellular space. It is found in the extracellular matrix. Its subcellular location is the basement membrane. Its function is as follows. Binding to cells via a high affinity receptor, laminin is thought to mediate the attachment, migration and organization of cells into tissues during embryonic development by interacting with other extracellular matrix components. The chain is Laminin subunit beta-3 (LAMB3) from Homo sapiens (Human).